The primary structure comprises 449 residues: UDP-glycosyltransferase 74F2 (449 aa).

UDP-alpha-D-glucose is bound by residues S273, 325 to 327, 342 to 350, and 364 to 367; these read SPQ, HCGWNSTME, and WTDQ.

The protein belongs to the UDP-glycosyltransferase family. In terms of tissue distribution, expressed in seedlings.

Glycosyltransferase that glucosylates benzoic acid and derivatives. Substrate preference is benzoic acid &gt; salicylic acid (SA) &gt; 3-hydroxybenzoic acid &gt; 4-hydroxybenzoic acid. Catalyzes the formation of both SA 2-O-beta-D-glucoside (SAG) and SA glucose ester (SGE). Has high affinity for the tryptophan precursor anthranilate. Catalyzes the formation of anthranilate glucose ester. Is the major source of this activity in the plant. The polypeptide is UDP-glycosyltransferase 74F2 (UGT74F2) (Arabidopsis thaliana (Mouse-ear cress)).